The primary structure comprises 86 residues: Large ribosomal subunit protein bL31B (86 aa).

Belongs to the bacterial ribosomal protein bL31 family. Type B subfamily. Part of the 50S ribosomal subunit.

This chain is Large ribosomal subunit protein bL31B, found in Vibrio parahaemolyticus serotype O3:K6 (strain RIMD 2210633).